We begin with the raw amino-acid sequence, 490 residues long: Glutamyl-tRNA(Gln) amidotransferase subunit A (490 aa).

Residues K79 and S154 each act as charge relay system in the active site. The Acyl-ester intermediate role is filled by S178.

The protein belongs to the amidase family. GatA subfamily. In terms of assembly, heterotrimer of A, B and C subunits.

It carries out the reaction L-glutamyl-tRNA(Gln) + L-glutamine + ATP + H2O = L-glutaminyl-tRNA(Gln) + L-glutamate + ADP + phosphate + H(+). Its function is as follows. Allows the formation of correctly charged Gln-tRNA(Gln) through the transamidation of misacylated Glu-tRNA(Gln) in organisms which lack glutaminyl-tRNA synthetase. The reaction takes place in the presence of glutamine and ATP through an activated gamma-phospho-Glu-tRNA(Gln). This Roseiflexus castenholzii (strain DSM 13941 / HLO8) protein is Glutamyl-tRNA(Gln) amidotransferase subunit A.